The chain runs to 274 residues: tRNA-cytidine(32) 2-sulfurtransferase (274 aa).

Residues 40–45 (SGGKDS) carry the PP-loop motif motif. [4Fe-4S] cluster contacts are provided by C115, C118, and C206.

This sequence belongs to the TtcA family. In terms of assembly, homodimer. Mg(2+) is required as a cofactor. The cofactor is [4Fe-4S] cluster.

Its subcellular location is the cytoplasm. The enzyme catalyses cytidine(32) in tRNA + S-sulfanyl-L-cysteinyl-[cysteine desulfurase] + AH2 + ATP = 2-thiocytidine(32) in tRNA + L-cysteinyl-[cysteine desulfurase] + A + AMP + diphosphate + H(+). It participates in tRNA modification. Catalyzes the ATP-dependent 2-thiolation of cytidine in position 32 of tRNA, to form 2-thiocytidine (s(2)C32). The sulfur atoms are provided by the cysteine/cysteine desulfurase (IscS) system. The polypeptide is tRNA-cytidine(32) 2-sulfurtransferase (Pseudomonas putida (strain ATCC 47054 / DSM 6125 / CFBP 8728 / NCIMB 11950 / KT2440)).